The primary structure comprises 431 residues: Enolase (431 aa).

Gln163 is a binding site for (2R)-2-phosphoglycerate. Catalysis depends on Glu205, which acts as the Proton donor. Residues Asp242, Glu288, and Asp315 each coordinate Mg(2+). Residues Lys340, Arg369, Ser370, and Lys391 each contribute to the (2R)-2-phosphoglycerate site. Residue Lys340 is the Proton acceptor of the active site.

The protein belongs to the enolase family. Requires Mg(2+) as cofactor.

The protein resides in the cytoplasm. The protein localises to the secreted. It localises to the cell surface. The catalysed reaction is (2R)-2-phosphoglycerate = phosphoenolpyruvate + H2O. The protein operates within carbohydrate degradation; glycolysis; pyruvate from D-glyceraldehyde 3-phosphate: step 4/5. Catalyzes the reversible conversion of 2-phosphoglycerate (2-PG) into phosphoenolpyruvate (PEP). It is essential for the degradation of carbohydrates via glycolysis. The sequence is that of Enolase from Latilactobacillus sakei subsp. sakei (strain 23K) (Lactobacillus sakei subsp. sakei).